Here is a 299-residue protein sequence, read N- to C-terminus: HTH-type transcriptional regulator ArgP (299 aa).

The region spanning 2-58 is the HTH lysR-type domain; the sequence is FDYKLLSALAAVIEQAGFERAAQVLGLSQSAISQRIKLLEARVGQPVLVRVTPPAPT. The H-T-H motif DNA-binding region spans 19-38; it reads FERAAQVLGLSQSAISQRIK.

The protein belongs to the LysR transcriptional regulatory family. In terms of assembly, homodimer.

In terms of biological role, controls the transcription of genes involved in arginine and lysine metabolism. The protein is HTH-type transcriptional regulator ArgP of Pseudomonas fluorescens (strain ATCC BAA-477 / NRRL B-23932 / Pf-5).